A 223-amino-acid polypeptide reads, in one-letter code: Adenylate kinase (223 aa).

10-15 (GAGKGT) provides a ligand contact to ATP. An NMP region spans residues 30-59 (STGDILRQAVKEGTEVGKIAGELMKAGKLI). Residues Thr31, Arg36, 57–59 (KLI), 85–88 (GFPR), and Gln92 each bind AMP. The interval 126–163 (GRYVCAQCGAGYHDEFKRPHKEGVCDICGSTEFKRRPD) is LID. Arg127 is a binding site for ATP. Zn(2+) contacts are provided by Cys130, Cys133, Cys150, and Cys153. Residues Arg160 and Arg172 each coordinate AMP. Residue Leu200 coordinates ATP.

Belongs to the adenylate kinase family. As to quaternary structure, monomer.

It localises to the cytoplasm. It catalyses the reaction AMP + ATP = 2 ADP. Its pathway is purine metabolism; AMP biosynthesis via salvage pathway; AMP from ADP: step 1/1. In terms of biological role, catalyzes the reversible transfer of the terminal phosphate group between ATP and AMP. Plays an important role in cellular energy homeostasis and in adenine nucleotide metabolism. The protein is Adenylate kinase of Zymomonas mobilis subsp. mobilis (strain ATCC 31821 / ZM4 / CP4).